A 910-amino-acid polypeptide reads, in one-letter code: Epithelial discoidin domain-containing receptor 1 (910 aa).

An N-terminal signal peptide occupies residues 1–19 (MGTGTLSSLLLLLLLVTIG). At 22-414 (DMKGHFDPAK…VAKAEGSPTA (393 aa)) the chain is on the extracellular side. Positions 32–186 (CRYALGMQDR…VCLRVELYGC (155 aa)) constitute an F5/8 type C domain. 2 disulfides stabilise this stretch: C32–C186 and C75–C178. Residues 193-368 (LSYTAPVGQT…LFSEISFISD (176 aa)) are DS-like domain. Ca(2+)-binding residues include N212, Q231, D234, V236, Y254, and Y256. An N-linked (GlcNAc...) asparagine glycan is attached at N212. N-linked (GlcNAc...) asparagine glycosylation is present at N261. A disulfide bridge connects residues C304 and C349. Positions 361 and 362 each coordinate Ca(2+). N-linked (GlcNAc...) asparagine glycosylation is found at N371 and N391. The chain crosses the membrane as a helical span at residues 415–435 (ILIGCLVAIILLLLLIIALML). The Cytoplasmic segment spans residues 436–910 (WRLHWRRLLS…FLADDALNTV (475 aa)). The segment at 467-494 (ILINNRPGPREPPPYQEPRPRGTPTHSA) is disordered. The short motif at 478 to 481 (PPPY) is the PPxY motif element. Phosphotyrosine; by autocatalysis is present on residues Y481, Y510, and Y517. The 296-residue stretch at 607–902 (LRFKEKLGEG…PPFSQLHRFL (296 aa)) folds into the Protein kinase domain. ATP-binding positions include 613–621 (LGEGQFGEV) and K652. Y737 bears the Phosphotyrosine; by autocatalysis mark. Residue D763 is the Proton acceptor of the active site. Phosphotyrosine; by autocatalysis is present on residues Y789, Y793, and Y794.

This sequence belongs to the protein kinase superfamily. Tyr protein kinase family. Insulin receptor subfamily. Homodimer. Interacts (via PPxY motif) with WWC1 (via WW domains) in a collagen-regulated manner. Forms a tripartite complex with WWC1 and PRKCZ, but predominantly in the absence of collagen. Interacts (tyrosine phosphorylated) with SHC1. Interacts with SRC. Interacts with MYH9. Interacts with CDH1. Interacts with PTPN11. Interacts with NCK2. Post-translationally, autophosphorylated in response to fibrillar collagen binding. In terms of tissue distribution, various embryonic and adult tissues; also proliferative zones of the developing brain; hippocampal neurons.

Its subcellular location is the cell membrane. The catalysed reaction is L-tyrosyl-[protein] + ATP = O-phospho-L-tyrosyl-[protein] + ADP + H(+). Functionally, tyrosine kinase that functions as a cell surface receptor for fibrillar collagen and regulates cell attachment to the extracellular matrix, remodeling of the extracellular matrix, cell migration, differentiation, survival and cell proliferation. Collagen binding triggers a signaling pathway that involves SRC and leads to the activation of MAP kinases. Regulates remodeling of the extracellular matrix by up-regulation of the matrix metalloproteinases MMP2, MMP7 and MMP9, and thereby facilitates cell migration and wound healing. Promotes smooth muscle cell migration, and thereby contributes to arterial wound healing. Also plays a role in tumor cell invasion. Phosphorylates PTPN11. Required for normal blastocyst implantation during pregnancy, for normal mammary gland differentiation and normal lactation. Required for normal ear morphology and normal hearing. The protein is Epithelial discoidin domain-containing receptor 1 (Ddr1) of Rattus norvegicus (Rat).